Reading from the N-terminus, the 269-residue chain is Ethylene-responsive transcription factor ERN1 (269 aa).

Residues 1–15 (MEIQFQQPNLQQHQK) show a composition bias toward polar residues. Disordered stretches follow at residues 1–36 (MEIQFQQPNLQQHQKAGTKGGKFKGRNRNSNTNKFV) and 128–157 (DVPAPSASTTSTSSNTSNSDKNDHNSLSSG). The segment at residues 34-91 (KFVGVRQRPSGRWVAEIKDTTQKIRMWLGTFETAEEAARAYDEAACLLRGSNTRTNFI) is a DNA-binding region (AP2/ERF). A compositionally biased stretch (low complexity) spans 128-146 (DVPAPSASTTSTSSNTSNS).

The protein belongs to the AP2/ERF transcription factor family. ERF subfamily.

The protein resides in the nucleus. Transcription factor involved in the symbiotic nodule signaling pathway in response to rhizobial stimulation. Functions as a transcriptional regulator required for root infection by symbiotic rhizobia, infection thread (IT) formation, and nodule development. May coordinate these processes. Functions downstream of the CCAMK-CYCLOPS complex. Probably not involved in arbuscular mycorrhizal (AM) symbiosis. The protein is Ethylene-responsive transcription factor ERN1 of Lotus japonicus (Lotus corniculatus var. japonicus).